We begin with the raw amino-acid sequence, 24 residues long: Fraternine (24 aa).

Cysteine 11 and cysteine 24 form a disulfide bridge. Cysteine amide is present on cysteine 24.

Expressed by the venom gland.

The protein resides in the secreted. Functionally, wasp venom peptide that acts as a potent mast cell degranulating peptide without hemolytic activity. Shows neuroprotective effect, since it prevents the death of dopaminergic neurons of the brain substantia nigra region and recovers motor deficit in a 6-hydroxydopamine (6-OHDA)-induced murine model of Parkinson disease. This Parachartergus fraternus (Artistic wasp) protein is Fraternine.